A 65-amino-acid chain; its full sequence is MITSIVNLCQILLVQRVTSVWRYPVRNIKPTNIEKFIHGGILYAAFLWLFYQPHICDGAFSIFNI.

This is an uncharacterized protein from Vaccinia virus (strain Copenhagen) (VACV).